Here is a 320-residue protein sequence, read N- to C-terminus: Quinolinate synthase (320 aa).

Positions 34 and 51 each coordinate iminosuccinate. Position 96 (Cys-96) interacts with [4Fe-4S] cluster. Residues 122–124 (YIN) and Ser-139 each bind iminosuccinate. Cys-182 serves as a coordination point for [4Fe-4S] cluster. Iminosuccinate-binding positions include 208–210 (HPE) and Thr-225. Cys-276 lines the [4Fe-4S] cluster pocket.

It belongs to the quinolinate synthase family. Type 2 subfamily. The cofactor is [4Fe-4S] cluster.

It is found in the cytoplasm. It catalyses the reaction iminosuccinate + dihydroxyacetone phosphate = quinolinate + phosphate + 2 H2O + H(+). It functions in the pathway cofactor biosynthesis; NAD(+) biosynthesis; quinolinate from iminoaspartate: step 1/1. In terms of biological role, catalyzes the condensation of iminoaspartate with dihydroxyacetone phosphate to form quinolinate. The polypeptide is Quinolinate synthase (Synechococcus sp. (strain ATCC 27144 / PCC 6301 / SAUG 1402/1) (Anacystis nidulans)).